Here is a 345-residue protein sequence, read N- to C-terminus: MKEFDLESYDYYLPKELIANYPVLPKEKAKLLVYERRSQKITHTTFEHVLDFFPKNALVVLNDTKVMKARLFGSKHALLPSKTTEVFFHRFFKDNTALTQIKGKIKAGDKIFFDANYHAEVLELLHNGQRLIAFYNHKTPLNQENILKLLEQYGHMPLPPYIKRTDESLDAHEYQSVFAKHIGAVAAPTASLHFSQNTLEKLLKDFKHAFLTLHVGAGTFLGVETKDIREHQIHTEILHIPKKSQEILRESQEVLCIGTTALRSVEYFKRLKNSNQESFECDIFLHLANPIQHVNYLLTNFHLPKSSLLMLVSAMIGLEKTKEIYKIAIEKKYRFYSYGDGMLIL.

Belongs to the QueA family. As to quaternary structure, monomer.

The protein localises to the cytoplasm. The enzyme catalyses 7-aminomethyl-7-carbaguanosine(34) in tRNA + S-adenosyl-L-methionine = epoxyqueuosine(34) in tRNA + adenine + L-methionine + 2 H(+). The protein operates within tRNA modification; tRNA-queuosine biosynthesis. Functionally, transfers and isomerizes the ribose moiety from AdoMet to the 7-aminomethyl group of 7-deazaguanine (preQ1-tRNA) to give epoxyqueuosine (oQ-tRNA). The chain is S-adenosylmethionine:tRNA ribosyltransferase-isomerase from Helicobacter pylori (strain HPAG1).